Reading from the N-terminus, the 119-residue chain is Ribonuclease P protein component (119 aa).

The protein belongs to the RnpA family. As to quaternary structure, consists of a catalytic RNA component (M1 or rnpB) and a protein subunit.

It catalyses the reaction Endonucleolytic cleavage of RNA, removing 5'-extranucleotides from tRNA precursor.. RNaseP catalyzes the removal of the 5'-leader sequence from pre-tRNA to produce the mature 5'-terminus. It can also cleave other RNA substrates such as 4.5S RNA. The protein component plays an auxiliary but essential role in vivo by binding to the 5'-leader sequence and broadening the substrate specificity of the ribozyme. In Chlamydia muridarum (strain MoPn / Nigg), this protein is Ribonuclease P protein component.